The following is a 673-amino-acid chain: NACHT, LRR and PYD domains-containing protein 10 (673 aa).

The 92-residue stretch at 1 to 92 (MALARANSPQ…VDYLNQVCLN (92 aa)) folds into the Pyrin domain. In terms of domain architecture, NACHT spans 163–469 (PIVVMQGSAG…AMSFLVKEDQ (307 aa)). 169-176 (GSAGTGKT) is an ATP binding site. Residues 578-673 (SDKKKSVSVT…DGEMIDKMNG (96 aa)) form a disordered region. The segment covering 584-597 (VSVTSSFSSGKVQS) has biased composition (low complexity). Positions 633 to 648 (ASREKGHMEMNDKEDG) are enriched in basic and acidic residues. The segment covering 649–658 (GVEEQEDEEG) has biased composition (acidic residues). Residues 659–673 (QTLKKDGEMIDKMNG) show a composition bias toward basic and acidic residues.

This sequence belongs to the NLRP family. As to quaternary structure, oligomerizes. Interacts with PYCARD. Also interacts with CASP1 and IL1B. Interacts with NOD1 and components of the NOD1 signaling pathway including RIPK2, NR2C2/TAK1 and IKBKG/NEMO. In terms of tissue distribution, expressed in skin, tongue, heart, colon and several cell lines of hematopoietic and myocytic origin but not in kidney, skeletal muscle, spleen, liver, lung, thymus, brain or small intestine (at protein level).

Its subcellular location is the cytoplasm. The protein resides in the cell membrane. Inhibits autoprocessing of CASP1, CASP1-dependent IL1B secretion, PYCARD aggregation and PYCARD-mediated apoptosis but not apoptosis induced by FAS or BID. Displays anti-inflammatory activity. Required for immunity against C.albicans infection. Involved in the innate immune response by contributing to pro-inflammatory cytokine release in response to invasive bacterial infection. Contributes to T-cell-mediated inflammatory responses in the skin. Plays a role in protection against periodontitis through its involvement in induction of IL1A via ERK activation in oral epithelial cells infected with periodontal pathogens. Exhibits both ATPase and GTPase activities. This chain is NACHT, LRR and PYD domains-containing protein 10 (Nlrp10), found in Mus musculus (Mouse).